A 564-amino-acid chain; its full sequence is Isopullulanase (564 aa).

The N-terminal stretch at 1–19 (MRSTGYLLTLSAAFQVAQA) is a signal peptide. Residues Asn-24, Asn-94, Asn-115, Asn-138, Asn-186, Asn-210, Asn-305, Asn-381, Asn-448, Asn-455, Asn-460, Asn-486, Asn-491, Asn-503, and Asn-535 are each glycosylated (N-linked (GlcNAc...) asparagine).

N-glycosylated.

The protein localises to the secreted. The catalysed reaction is Hydrolysis of pullulan to isopanose (6-alpha-maltosylglucose).. In terms of biological role, hydrolyzes pullulan, a linear polymer which is composed of maltotriose units with alpha-1,6 glucosidic linkages, to produce isopanose (Glca1-4Glca1-6Glc). This is Isopullulanase (ipuA) from Aspergillus niger.